The primary structure comprises 386 residues: L-lactate dehydrogenase (386 aa).

The 380-residue stretch at 1–380 folds into the FMN hydroxy acid dehydrogenase domain; sequence MIISASTDYR…TSDSLVQVTQ (380 aa). Tyr-24 serves as a coordination point for substrate. The FMN site is built by Ser-106 and Gln-127. Residue Tyr-129 participates in substrate binding. Thr-155 is an FMN binding site. Arg-164 serves as a coordination point for substrate. Lys-251 lines the FMN pocket. The active-site Proton acceptor is His-275. Arg-278 is a substrate binding site. 306 to 330 contributes to the FMN binding site; the sequence is DSGIRSGLDVVRMIALGADGVMLGR.

This sequence belongs to the FMN-dependent alpha-hydroxy acid dehydrogenase family. FMN is required as a cofactor.

Its subcellular location is the cell inner membrane. It catalyses the reaction (S)-lactate + A = pyruvate + AH2. In terms of biological role, catalyzes the conversion of L-lactate to pyruvate. Is coupled to the respiratory chain. In Pectobacterium atrosepticum (strain SCRI 1043 / ATCC BAA-672) (Erwinia carotovora subsp. atroseptica), this protein is L-lactate dehydrogenase.